A 589-amino-acid polypeptide reads, in one-letter code: UvrABC system protein C (589 aa).

In terms of domain architecture, GIY-YIG spans 14–91 (HKPGCYLWKD…IAKYKPKYNM (78 aa)).

Belongs to the UvrC family. In terms of assembly, interacts with UvrB in an incision complex.

Its subcellular location is the cytoplasm. Its function is as follows. The UvrABC repair system catalyzes the recognition and processing of DNA lesions. UvrC both incises the 5' and 3' sides of the lesion. The N-terminal half is responsible for the 3' incision and the C-terminal half is responsible for the 5' incision. This is UvrABC system protein C from Malacoplasma penetrans (strain HF-2) (Mycoplasma penetrans).